A 361-amino-acid chain; its full sequence is tRNA 2-selenouridine synthase (361 aa).

One can recognise a Rhodanese domain in the interval 14 to 137 (LIADTPIIDV…LRQTAIQATI (124 aa)). Cysteine 97 serves as the catalytic S-selanylcysteine intermediate.

It belongs to the SelU family. As to quaternary structure, monomer.

It catalyses the reaction 5-methylaminomethyl-2-thiouridine(34) in tRNA + selenophosphate + (2E)-geranyl diphosphate + H2O + H(+) = 5-methylaminomethyl-2-selenouridine(34) in tRNA + (2E)-thiogeraniol + phosphate + diphosphate. It carries out the reaction 5-methylaminomethyl-2-thiouridine(34) in tRNA + (2E)-geranyl diphosphate = 5-methylaminomethyl-S-(2E)-geranyl-thiouridine(34) in tRNA + diphosphate. The enzyme catalyses 5-methylaminomethyl-S-(2E)-geranyl-thiouridine(34) in tRNA + selenophosphate + H(+) = 5-methylaminomethyl-2-(Se-phospho)selenouridine(34) in tRNA + (2E)-thiogeraniol. The catalysed reaction is 5-methylaminomethyl-2-(Se-phospho)selenouridine(34) in tRNA + H2O = 5-methylaminomethyl-2-selenouridine(34) in tRNA + phosphate. Involved in the post-transcriptional modification of the uridine at the wobble position (U34) of tRNA(Lys), tRNA(Glu) and tRNA(Gln). Catalyzes the conversion of 2-thiouridine (S2U-RNA) to 2-selenouridine (Se2U-RNA). Acts in a two-step process involving geranylation of 2-thiouridine (S2U) to S-geranyl-2-thiouridine (geS2U) and subsequent selenation of the latter derivative to 2-selenouridine (Se2U) in the tRNA chain. This Escherichia coli O6:H1 (strain CFT073 / ATCC 700928 / UPEC) protein is tRNA 2-selenouridine synthase.